A 192-amino-acid chain; its full sequence is PTS-dependent dihydroxyacetone kinase, ADP-binding subunit DhaL (192 aa).

The DhaL domain maps to 5-189 (DTTIEWLGKF…SAYLFETLLE (185 aa)). Mg(2+) is bound by residues D29, D34, and D36. Residues 37 to 40 (HGAN), 78 to 79 (AS), G115, M124, R161, and 174 to 176 (DPG) contribute to the ADP site.

As to quaternary structure, homodimer. The dihydroxyacetone kinase complex is composed of a homodimer of DhaM, a homodimer of DhaK and the subunit DhaL. Requires Mg(2+) as cofactor.

The protein localises to the cytoplasm. It catalyses the reaction dihydroxyacetone + phosphoenolpyruvate = dihydroxyacetone phosphate + pyruvate. It participates in polyol metabolism; glycerol degradation. In terms of biological role, ADP-binding subunit of the dihydroxyacetone kinase, which is responsible for the phosphoenolpyruvate (PEP)-dependent phosphorylation of dihydroxyacetone. DhaL-ADP is converted to DhaL-ATP via a phosphoryl group transfer from DhaM and transmits it to dihydroxyacetone binds to DhaK. The polypeptide is PTS-dependent dihydroxyacetone kinase, ADP-binding subunit DhaL (Lactococcus lactis subsp. lactis (strain IL1403) (Streptococcus lactis)).